Reading from the N-terminus, the 218-residue chain is Large ribosomal subunit protein uL4 (218 aa).

The segment at 54–106 is disordered; the sequence is GTHAVKNRGAVSGGGRKPWKQKGTGRARQGSIRAPQWYHGGVAHGPVPRDYSQ.

The protein belongs to the universal ribosomal protein uL4 family. As to quaternary structure, part of the 50S ribosomal subunit.

In terms of biological role, one of the primary rRNA binding proteins, this protein initially binds near the 5'-end of the 23S rRNA. It is important during the early stages of 50S assembly. It makes multiple contacts with different domains of the 23S rRNA in the assembled 50S subunit and ribosome. Its function is as follows. Forms part of the polypeptide exit tunnel. This Bifidobacterium animalis subsp. lactis (strain AD011) protein is Large ribosomal subunit protein uL4.